Reading from the N-terminus, the 255-residue chain is Imidazole glycerol phosphate synthase subunit HisF (255 aa).

Active-site residues include Asp12 and Asp131.

The protein belongs to the HisA/HisF family. In terms of assembly, heterodimer of HisH and HisF.

Its subcellular location is the cytoplasm. It catalyses the reaction 5-[(5-phospho-1-deoxy-D-ribulos-1-ylimino)methylamino]-1-(5-phospho-beta-D-ribosyl)imidazole-4-carboxamide + L-glutamine = D-erythro-1-(imidazol-4-yl)glycerol 3-phosphate + 5-amino-1-(5-phospho-beta-D-ribosyl)imidazole-4-carboxamide + L-glutamate + H(+). The protein operates within amino-acid biosynthesis; L-histidine biosynthesis; L-histidine from 5-phospho-alpha-D-ribose 1-diphosphate: step 5/9. IGPS catalyzes the conversion of PRFAR and glutamine to IGP, AICAR and glutamate. The HisF subunit catalyzes the cyclization activity that produces IGP and AICAR from PRFAR using the ammonia provided by the HisH subunit. The polypeptide is Imidazole glycerol phosphate synthase subunit HisF (Vesicomyosocius okutanii subsp. Calyptogena okutanii (strain HA)).